The primary structure comprises 366 residues: Stage V sporulation protein E (366 aa).

10 consecutive transmembrane segments (helical) span residues 10–30, 50–70, 77–97, 105–125, 144–164, 185–205, 227–247, 264–284, 306–326, and 337–357; these read LLLVIITLLLLTIGLIMVYSA, LLFAGIGVIAMFFIMNVDYWT, LLMVICFFLLVLVLIPGVGMV, IGVGAFSIQPSEFMKLAMIAF, FVPALGIVFSAFLIIMCQPDL, IAHFVFLGLIGLSGFVGLVLS, GFQIIQSLYAVGPGGLFGMGL, FIFAILSEELGFIGGTLILLL, FVAVGIISMIAIQVMINIGVV, and LPFLSYGGSSLTLMLMAVGVL.

The protein belongs to the SEDS family. SpoVE subfamily.

It is found in the cell membrane. Functionally, may play an essential role not only during sporulation, but also during vegetative growth. The protein is Stage V sporulation protein E (spoVE) of Bacillus subtilis (strain 168).